The following is a 727-amino-acid chain: Cyclin-T1 (727 aa).

Ser117 is subject to Phosphoserine. Residues 253–270 (KRIRNWRACQAAKKTKAD) carry the Nuclear localization signal, and interaction with Tat-TAR RNA motif. Low complexity predominate over residues 302–322 (MSTSSTTSTVPSLPTTEESSS). A disordered region spans residues 302 to 326 (MSTSSTTSTVPSLPTTEESSSNLSG). A Glycyl lysine isopeptide (Lys-Gly) (interchain with G-Cter in SUMO2) cross-link involves residue Lys343. A coiled-coil region spans residues 386-427 (SAKVSLKEYRAKHAEELAAQKRQLENMEANVKSQYAYAAQNL). The residue at position 390 (Ser390) is a Phosphoserine. Position 392 is an N6-acetyllysine (Lys392). A Glycyl lysine isopeptide (Lys-Gly) (interchain with G-Cter in SUMO2) cross-link involves residue Lys417. 3 positions are modified to ADP-ribosylserine: Ser418, Ser476, and Ser477. Residues 482–552 (IKMRIKVHAA…RPGDPKHSSQ (71 aa)) are histidine-rich domain (HRD). Lys483 is covalently cross-linked (Glycyl lysine isopeptide (Lys-Gly) (interchain with G-Cter in SUMO2)). Basic and acidic residues predominate over residues 486–508 (IKVHAAPDKHNSIDDSVTKSREH). Disordered stretches follow at residues 486–591 (IKVH…DHPA) and 692–727 (LNPR…PLPK). Lys487 carries the N6-(ADP-ribosyl)lysine modification. The residue at position 489 (His489) is an ADP-ribosylhistidine. 2 positions are modified to phosphoserine: Ser497 and Ser501. A compositionally biased stretch (basic residues) spans 509 to 532 (KEKHKTHPSNHHHHHNHHSHKHSH). Position 532 is an ADP-ribosylhistidine (His532). Ser533, Ser551, and Ser554 each carry ADP-ribosylserine. An ADP-ribosylhistidine modification is found at His558. Low complexity predominate over residues 562 to 572 (SLSSSFSSSSS). An ADP-ribosylserine modification is found at Ser565. Ser566 bears the Phosphoserine mark. The segment covering 711–727 (LPPLPSEPPPPLPPLPK) has biased composition (pro residues).

The protein belongs to the cyclin family. Cyclin C subfamily. In terms of assembly, cyclin-T1 is the predominant cyclin that associates with CDK9 to form a heterodimer called P-TEFb. P-TEFb forms a complex with AFF4/AF5Q31. Component of a complex which is at least composed of HTATSF1/Tat-SF1, P-TEFb complex, RNA pol II, SUPT5H, and NCL/nucleolin. Component of the 7SK snRNP complex at least composed of P-TEFb (composed of CDK9 and CCNT1/cyclin-T1), HEXIM1, HEXIM2, BCDIN3, SART3 proteins and 7SK and U6 snRNAs. Interacts (via central region) with ZMYND8 (via N-terminus); the interaction is direct and the association appears to occur between homodimeric ZMYND8 and the activated form of the P-TEFb complex. Interacts with BRD4, targets chromatin binding. Interacts with JMJD6. Interacts with MDFIC. Interacts with HSF1. Interacts with HTATSF1. Interacts with TBX21. Post-translationally, ADP-ribosylation on serine residues by PARP1 in response to DNA damage disrupts the phase separation activity of CCNT1, thereby preventing activation of CDK9.

The protein resides in the nucleus. Regulatory subunit of the cyclin-dependent kinase pair (CDK9/cyclin-T1) complex, also called positive transcription elongation factor B (P-TEFb), which facilitates the transition from abortive to productive elongation by phosphorylating the CTD (C-terminal domain) of the large subunit of RNA polymerase II (RNA Pol II). Required to activate the protein kinase activity of CDK9: acts by mediating formation of liquid-liquid phase separation (LLPS) that enhances binding of P-TEFb to the CTD of RNA Pol II. The protein is Cyclin-T1 (CCNT1) of Equus caballus (Horse).